We begin with the raw amino-acid sequence, 333 residues long: GTPase Obg (333 aa).

Residues 1–158 (MFIDSAKIYV…RNIDLELKLL (158 aa)) enclose the Obg domain. Residues 121-143 (HGGKGNQHFATPTNRAPRYSEPA) are disordered. Residues 159-323 (ADIGLVGFPN…LKDVLWRIIQ (165 aa)) enclose the OBG-type G domain. Residues 165-172 (GFPNAGKS), 190-194 (FTTLE), 212-215 (DIPG), 279-282 (SKMD), and 304-306 (SSV) each bind GTP. Residues Ser-172 and Thr-192 each contribute to the Mg(2+) site.

It belongs to the TRAFAC class OBG-HflX-like GTPase superfamily. OBG GTPase family. In terms of assembly, monomer. The cofactor is Mg(2+).

It localises to the cytoplasm. Its function is as follows. An essential GTPase which binds GTP, GDP and possibly (p)ppGpp with moderate affinity, with high nucleotide exchange rates and a fairly low GTP hydrolysis rate. Plays a role in control of the cell cycle, stress response, ribosome biogenesis and in those bacteria that undergo differentiation, in morphogenesis control. The protein is GTPase Obg of Chloroherpeton thalassium (strain ATCC 35110 / GB-78).